The chain runs to 198 residues: Large ribosomal subunit protein bL25 (198 aa).

It belongs to the bacterial ribosomal protein bL25 family. CTC subfamily. Part of the 50S ribosomal subunit; part of the 5S rRNA/L5/L18/L25 subcomplex. Contacts the 5S rRNA. Binds to the 5S rRNA independently of L5 and L18.

Its function is as follows. This is one of the proteins that binds to the 5S RNA in the ribosome where it forms part of the central protuberance. The sequence is that of Large ribosomal subunit protein bL25 from Pseudomonas putida (strain W619).